A 298-amino-acid polypeptide reads, in one-letter code: UPF0282 protein Kcr_0286 (298 aa).

It belongs to the UPF0282 family.

The sequence is that of UPF0282 protein Kcr_0286 from Korarchaeum cryptofilum (strain OPF8).